The following is a 185-amino-acid chain: Large ribosomal subunit protein uL5 (185 aa).

It belongs to the universal ribosomal protein uL5 family. In terms of assembly, part of the 50S ribosomal subunit; part of the 5S rRNA/L5/L18/L25 subcomplex. Contacts the 5S rRNA and the P site tRNA. Forms a bridge to the 30S subunit in the 70S ribosome.

Functionally, this is one of the proteins that bind and probably mediate the attachment of the 5S RNA into the large ribosomal subunit, where it forms part of the central protuberance. In the 70S ribosome it contacts protein S13 of the 30S subunit (bridge B1b), connecting the 2 subunits; this bridge is implicated in subunit movement. Contacts the P site tRNA; the 5S rRNA and some of its associated proteins might help stabilize positioning of ribosome-bound tRNAs. This Parabacteroides distasonis (strain ATCC 8503 / DSM 20701 / CIP 104284 / JCM 5825 / NCTC 11152) protein is Large ribosomal subunit protein uL5.